The sequence spans 180 residues: Large ribosomal subunit protein uL5 (180 aa).

Belongs to the universal ribosomal protein uL5 family. Part of the 50S ribosomal subunit; part of the 5S rRNA/L5/L18/L25 subcomplex. Contacts the 5S rRNA and the P site tRNA. Forms a bridge to the 30S subunit in the 70S ribosome.

Functionally, this is one of the proteins that bind and probably mediate the attachment of the 5S RNA into the large ribosomal subunit, where it forms part of the central protuberance. In the 70S ribosome it contacts protein S13 of the 30S subunit (bridge B1b), connecting the 2 subunits; this bridge is implicated in subunit movement. Contacts the P site tRNA; the 5S rRNA and some of its associated proteins might help stabilize positioning of ribosome-bound tRNAs. The polypeptide is Large ribosomal subunit protein uL5 (Leuconostoc mesenteroides subsp. mesenteroides (strain ATCC 8293 / DSM 20343 / BCRC 11652 / CCM 1803 / JCM 6124 / NCDO 523 / NBRC 100496 / NCIMB 8023 / NCTC 12954 / NRRL B-1118 / 37Y)).